A 378-amino-acid polypeptide reads, in one-letter code: Chaperone protein DnaJ (378 aa).

The J domain maps to Asp-6–Gly-70. The CR-type zinc finger occupies Gly-137–Lys-219. Positions 150, 153, 167, 170, 193, 196, 207, and 210 each coordinate Zn(2+). 4 CXXCXGXG motif repeats span residues Cys-150–Gly-157, Cys-167–Gly-174, Cys-193–Gly-200, and Cys-207–Gly-214.

It belongs to the DnaJ family. Homodimer. The cofactor is Zn(2+).

It localises to the cytoplasm. Functionally, participates actively in the response to hyperosmotic and heat shock by preventing the aggregation of stress-denatured proteins and by disaggregating proteins, also in an autonomous, DnaK-independent fashion. Unfolded proteins bind initially to DnaJ; upon interaction with the DnaJ-bound protein, DnaK hydrolyzes its bound ATP, resulting in the formation of a stable complex. GrpE releases ADP from DnaK; ATP binding to DnaK triggers the release of the substrate protein, thus completing the reaction cycle. Several rounds of ATP-dependent interactions between DnaJ, DnaK and GrpE are required for fully efficient folding. Also involved, together with DnaK and GrpE, in the DNA replication of plasmids through activation of initiation proteins. This chain is Chaperone protein DnaJ, found in Lactobacillus delbrueckii subsp. bulgaricus (strain ATCC 11842 / DSM 20081 / BCRC 10696 / JCM 1002 / NBRC 13953 / NCIMB 11778 / NCTC 12712 / WDCM 00102 / Lb 14).